Consider the following 164-residue polypeptide: Protein-export protein SecB (164 aa).

It belongs to the SecB family. As to quaternary structure, homotetramer, a dimer of dimers. One homotetramer interacts with 1 SecA dimer.

The protein localises to the cytoplasm. One of the proteins required for the normal export of preproteins out of the cell cytoplasm. It is a molecular chaperone that binds to a subset of precursor proteins, maintaining them in a translocation-competent state. It also specifically binds to its receptor SecA. The polypeptide is Protein-export protein SecB (Stutzerimonas stutzeri (strain A1501) (Pseudomonas stutzeri)).